The chain runs to 225 residues: MDKLIAVLVLITLGSIMVNVGVHYVPVGGAPAAMATATGVGTGTTQLAAGSGLTGLITAAAMSQKPFLVILWNGALGAATMMAITMLVGNFIYVYGVGCPPCSAKVDKDPITGWDQEAYVTPGTEGHGIPTVSFVSGILGGLLGGSGGAMVYYALYKVLGMSAALAGILAMGFFYANAVLASYNIGGTIEGYHDPKFTRLPKAVVCSLVFGIVASVIAYYLSTLM.

Helical transmembrane passes span 5 to 25 (IAVLVLITLGSIMVNVGVHYV), 40 to 60 (VGTGTTQLAAGSGLTGLITAA), 67 to 87 (FLVILWNGALGAATMMAITML), 132 to 152 (VSFVSGILGGLLGGSGGAMVY), 161 to 181 (MSAALAGILAMGFFYANAVLA), and 204 to 224 (VVCSLVFGIVASVIAYYLSTL).

Belongs to the MtrD family. The complex is composed of 8 subunits; MtrA, MtrB, MtrC, MtrD, MtrE, MtrF, MtrG and MtrH.

The protein localises to the cell membrane. The enzyme catalyses 5-methyl-5,6,7,8-tetrahydromethanopterin + coenzyme M + 2 Na(+)(in) = 5,6,7,8-tetrahydromethanopterin + methyl-coenzyme M + 2 Na(+)(out). Its pathway is one-carbon metabolism; methanogenesis from CO(2); methyl-coenzyme M from 5,10-methylene-5,6,7,8-tetrahydromethanopterin: step 2/2. Functionally, part of a complex that catalyzes the formation of methyl-coenzyme M and tetrahydromethanopterin from coenzyme M and methyl-tetrahydromethanopterin. This is an energy-conserving, sodium-ion translocating step. In Methanopyrus kandleri (strain AV19 / DSM 6324 / JCM 9639 / NBRC 100938), this protein is Tetrahydromethanopterin S-methyltransferase subunit D (mtrD).